Reading from the N-terminus, the 305-residue chain is Chromatin modification-related protein png2 (305 aa).

Residues 135 to 239 (TVTPQTSERR…PLVKHDTLDS (105 aa)) are disordered. The span at 153–167 (NQHSQQYSSQERSSS) shows a compositional bias: low complexity. 2 stretches are compositionally biased toward polar residues: residues 168–183 (YNNFEDASSPQSSYHT) and 195–210 (KSSSPPLSSTKHAPQS). A Phosphotyrosine modification is found at Tyr181. A Phosphothreonine modification is found at Thr183. 2 positions are modified to phosphoserine: Ser197 and Ser198. The segment covering 211-223 (TERRPVRRSESRL) has biased composition (basic and acidic residues). A PHD-type zinc finger spans residues 248 to 297 (QLYCYCQQVSYGQMIGCDNENCKREWFHLPCVGLVEPPKGIWYCKECEEL). Positions 251, 253, 264, 269, 275, 278, 291, and 294 each coordinate Zn(2+).

It belongs to the ING family. As to quaternary structure, interacts with H3K4me3 and to a lesser extent with H3K4me2. Component of the clr6 histone deacetylase complex I'composed of at least clr6, png2, prw1, pst1 and sds3.

The protein localises to the cytoplasm. The protein resides in the nucleus. Its function is as follows. Component of the clr6 histone deacetylase complex I' responsible for the deacetylation of lysine residues on the N-terminal part of the core histones (H2A, H2B, H3 and H4). Histone deacetylation gives a tag for epigenetic repression and plays an important role in transcriptional regulation, cell cycle progression and developmental events. Has a role in silencing of mating type genes. This Schizosaccharomyces pombe (strain 972 / ATCC 24843) (Fission yeast) protein is Chromatin modification-related protein png2 (png2).